The primary structure comprises 231 residues: 7-cyano-7-deazaguanine synthase (231 aa).

Position 8–18 (8–18 (FSGGQDSTTCL)) interacts with ATP. Positions 188, 197, 200, and 203 each coordinate Zn(2+).

Belongs to the QueC family. Zn(2+) is required as a cofactor.

The enzyme catalyses 7-carboxy-7-deazaguanine + NH4(+) + ATP = 7-cyano-7-deazaguanine + ADP + phosphate + H2O + H(+). Its pathway is purine metabolism; 7-cyano-7-deazaguanine biosynthesis. Its function is as follows. Catalyzes the ATP-dependent conversion of 7-carboxy-7-deazaguanine (CDG) to 7-cyano-7-deazaguanine (preQ(0)). In Salmonella newport (strain SL254), this protein is 7-cyano-7-deazaguanine synthase.